We begin with the raw amino-acid sequence, 1248 residues long: ABC transporter B family member 7 (1248 aa).

A run of 6 helical transmembrane segments spans residues isoleucine 32–methionine 52, phenylalanine 82–valine 102, phenylalanine 158–valine 175, leucine 179–methionine 201, glycine 261–tyrosine 281, and valine 299–alanine 321. Residues methionine 35–alanine 322 form the ABC transmembrane type-1 1 domain. The ABC transporter 1 domain occupies isoleucine 357–arginine 593. Glycine 392–serine 399 serves as a coordination point for ATP. N-linked (GlcNAc...) asparagine glycosylation is found at asparagine 473 and asparagine 652. The helical transmembrane segment at valine 682–leucine 702 threads the bilayer. In terms of domain architecture, ABC transmembrane type-1 2 spans leucine 683–lysine 970. Asparagine 720 carries an N-linked (GlcNAc...) asparagine glycan. Residues serine 722–leucine 742 form a helical membrane-spanning segment. N-linked (GlcNAc...) asparagine glycosylation occurs at asparagine 779. Transmembrane regions (helical) follow at residues isoleucine 813–leucine 833, valine 834–alanine 854, glycine 914–isoleucine 934, and alanine 939–threonine 959. The 238-residue stretch at isoleucine 1005–alanine 1242 folds into the ABC transporter 2 domain. An ATP-binding site is contributed by glycine 1040–serine 1047. N-linked (GlcNAc...) asparagine glycans are attached at residues asparagine 1094, asparagine 1193, and asparagine 1244.

Belongs to the ABC transporter superfamily. ABCB family. Multidrug resistance exporter (TC 3.A.1.201) subfamily.

It localises to the membrane. This is ABC transporter B family member 7 (ABCB7) from Arabidopsis thaliana (Mouse-ear cress).